Here is a 210-residue protein sequence, read N- to C-terminus: Proteasome subunit beta (210 aa).

Residues 1-9 (MDNDKHLKG) constitute a propeptide, removed in mature form; by autocatalysis. The active-site Nucleophile is threonine 10.

The protein belongs to the peptidase T1B family. As to quaternary structure, the 20S proteasome core is composed of 14 alpha and 14 beta subunits that assemble into four stacked heptameric rings, resulting in a barrel-shaped structure. The two inner rings, each composed of seven catalytic beta subunits, are sandwiched by two outer rings, each composed of seven alpha subunits. The catalytic chamber with the active sites is on the inside of the barrel. Has a gated structure, the ends of the cylinder being occluded by the N-termini of the alpha-subunits. Is capped at one or both ends by the proteasome regulatory ATPase, PAN.

It is found in the cytoplasm. It carries out the reaction Cleavage of peptide bonds with very broad specificity.. With respect to regulation, the formation of the proteasomal ATPase PAN-20S proteasome complex, via the docking of the C-termini of PAN into the intersubunit pockets in the alpha-rings, triggers opening of the gate for substrate entry. Interconversion between the open-gate and close-gate conformations leads to a dynamic regulation of the 20S proteasome proteolysis activity. In terms of biological role, component of the proteasome core, a large protease complex with broad specificity involved in protein degradation. This is Proteasome subunit beta from Methanococcoides burtonii (strain DSM 6242 / NBRC 107633 / OCM 468 / ACE-M).